The chain runs to 164 residues: Phosphopantetheine adenylyltransferase (164 aa).

Serine 9 lines the substrate pocket. Residues 9-10 (SF) and histidine 17 each bind ATP. Residues lysine 41, leucine 73, and lysine 87 each contribute to the substrate site. ATP-binding positions include 88 to 90 (GLR), glutamate 98, and 123 to 129 (YSYLSSS).

This sequence belongs to the bacterial CoaD family. As to quaternary structure, homohexamer. Mg(2+) serves as cofactor.

Its subcellular location is the cytoplasm. It catalyses the reaction (R)-4'-phosphopantetheine + ATP + H(+) = 3'-dephospho-CoA + diphosphate. It functions in the pathway cofactor biosynthesis; coenzyme A biosynthesis; CoA from (R)-pantothenate: step 4/5. Reversibly transfers an adenylyl group from ATP to 4'-phosphopantetheine, yielding dephospho-CoA (dPCoA) and pyrophosphate. The protein is Phosphopantetheine adenylyltransferase of Clostridium botulinum (strain Okra / Type B1).